The chain runs to 1210 residues: Adenine-specific methyltransferase PglX (1210 aa).

The span at 1181 to 1194 (KQGEHGLTDDDLRG) shows a compositional bias: basic and acidic residues. A disordered region spans residues 1181–1210 (KQGEHGLTDDDLRGWRPPAATRRRRAAAKQ). Positions 1201 to 1210 (TRRRRAAAKQ) are enriched in basic residues.

Belongs to the methyltransferase superfamily. PglX adenine methyltransferase family.

The catalysed reaction is a 2'-deoxyadenosine in DNA + S-adenosyl-L-methionine = an N(6)-methyl-2'-deoxyadenosine in DNA + S-adenosyl-L-homocysteine + H(+). BREX systems (bacteriophage exclusion) provide immunity against bacteriophage. Part of a type 2 BREX system. Probably a DNA methyltransferase, it methylates phage DNA in vitro in an S-adenosyl-L-methionine-dependent manner. Previously called the phage growth limitation (Pgl) system, it confers protection against bacteriophage phiC31. The bacteria allows one cycle of phage infection, but subsequent cycles are impaired, protecting the original bacterial colony. The system undergoes high rates (10(-3) to 10(-4)) of phase reversion, i.e. loss and regain of phiC31 resistance. When the pglW-pglX-pglY-pglZ genes are transformed into a susceptible S.lividans (strain 1326) they confer resistance to infection by phage phiC31 and phiBT1; all 4 genes are necessary. In terms of biological role, probably a toxic component of a type II toxin-antitoxin (TA) system. The toxic activity is inhibited by its cognate antitoxin PglZ. Functionally, may be a subtypes G and alpha restriction enzyme that recognizes and cleaves an unknown sequence. Methylates an adenine residue in the same sequence. In Streptomyces coelicolor (strain ATCC BAA-471 / A3(2) / M145), this protein is Adenine-specific methyltransferase PglX.